The following is a 373-amino-acid chain: Type 2 DNA topoisomerase 6 subunit A (373 aa).

The region spanning Gln15 to Ala153 is the Topo IIA-type catalytic domain. Tyr110 serves as the catalytic O-(5'-phospho-DNA)-tyrosine intermediate. The Mg(2+) site is built by Glu206 and Asp258.

This sequence belongs to the TOP6A family. Homodimer. Heterotetramer of two Top6A and two Top6B chains. The cofactor is Mg(2+).

The catalysed reaction is ATP-dependent breakage, passage and rejoining of double-stranded DNA.. Relaxes both positive and negative superturns and exhibits a strong decatenase activity. The sequence is that of Type 2 DNA topoisomerase 6 subunit A from Methanosarcina acetivorans (strain ATCC 35395 / DSM 2834 / JCM 12185 / C2A).